Reading from the N-terminus, the 607-residue chain is Autophagy-related protein 22-2 (607 aa).

Residues 1 to 29 (MTVAPPSPNSPAAELQQRPPRYPGEDTTP) form a disordered region. A helical transmembrane segment spans residues 41-61 (YGIAAEVFAVCGVGSFLPLTL). N89 is a glycosylation site (N-linked (GlcNAc...) asparagine). Transmembrane regions (helical) follow at residues 119–139 (SFAMYTFSLAVLVQALTLISF), 151–170 (TLLLAFGFIGSATSMLFVFI), and 188–208 (CLGSSFVVLNSFLPVLVANDP). The segment at 235-263 (SFSASDAESGPHPAAEAGSGTSSGPASPE) is disordered. Residues 247–263 (PAAEAGSGTSSGPASPE) show a composition bias toward low complexity. The next 4 membrane-spanning stretches (helical) occupy residues 274–294 (GVGLGYCAAVLVQILSISLLF), 307–327 (TLPLRFVLLLVGIWWFSFTMV), 379–399 (VLVFLAAWFLLSDAMATVSGT), and 415–435 (VGLLSITATLSGMAGAFLWPV). N445 carries N-linked (GlcNAc...) asparagine glycosylation. A run of 4 helical transmembrane segments spans residues 450 to 470 (LCIALFEIIPLYGMLAYIPVF), 485 to 507 (FPLAIVHGVVSGGLSSYCRSFFG), 519 to 541 (YALYAATDKGSSVIGPAIVGMLI), and 550 to 570 (GFFFIAPLILMPIPLIWIVNA). Residues 586 to 607 (KGHETEMSEQTEEAEGLLARGI) form a disordered region.

The protein belongs to the ATG22 family.

The protein localises to the vacuole membrane. Functionally, vacuolar effluxer which mediate the efflux of amino acids resulting from autophagic degradation. The release of autophagic amino acids allows the maintenance of protein synthesis and viability during nitrogen starvation. The protein is Autophagy-related protein 22-2 (atg22-2) of Aspergillus oryzae (strain ATCC 42149 / RIB 40) (Yellow koji mold).